Here is a 236-residue protein sequence, read N- to C-terminus: Probable glutathione S-transferase BZ2 (236 aa).

The GST N-terminal domain maps to 1 to 80; the sequence is MRVLGGEVSP…YIEDVARESG (80 aa). Glutathione contacts are provided by residues S9, K37, I51, and 64–65; that span reads ES. The region spanning 92–221 is the GST C-terminal domain; it reads DPYERAMHRF…LPDTEKVVQF (130 aa).

It belongs to the GST superfamily. HSP26 family.

The enzyme catalyses RX + glutathione = an S-substituted glutathione + a halide anion + H(+). The protein operates within pigment biosynthesis; anthocyanin biosynthesis. This chain is Probable glutathione S-transferase BZ2 (BZ2), found in Zea mays (Maize).